The following is a 465-amino-acid chain: Asparagine--tRNA ligase (465 aa).

The protein belongs to the class-II aminoacyl-tRNA synthetase family. In terms of assembly, homodimer.

The protein localises to the cytoplasm. The catalysed reaction is tRNA(Asn) + L-asparagine + ATP = L-asparaginyl-tRNA(Asn) + AMP + diphosphate + H(+). In Pseudoalteromonas translucida (strain TAC 125), this protein is Asparagine--tRNA ligase.